A 202-amino-acid polypeptide reads, in one-letter code: UPF0126 membrane protein YvgT (202 aa).

Transmembrane regions (helical) follow at residues 3 to 23 (WELL…IVAM), 26 to 46 (EYDI…GGAI), 63 to 83 (AYFQ…KLLL), 90 to 110 (GNLS…LYAV), 113 to 133 (GHPL…GGII), and 160 to 180 (IVGL…FVLV).

The protein belongs to the UPF0126 family.

The protein resides in the cell membrane. The protein is UPF0126 membrane protein YvgT (yvgT) of Bacillus subtilis (strain 168).